Here is a 237-residue protein sequence, read N- to C-terminus: Purine nucleoside phosphorylase DeoD-type (237 aa).

Histidine 4 serves as a coordination point for a purine D-ribonucleoside. Phosphate-binding positions include glycine 20, arginine 24, arginine 43, and 87–90 (RVGT). Residues 179–181 (EME) and 203–204 (SD) contribute to the a purine D-ribonucleoside site. The active-site Proton donor is aspartate 204.

Belongs to the PNP/UDP phosphorylase family. Homohexamer; trimer of homodimers.

The catalysed reaction is a purine D-ribonucleoside + phosphate = a purine nucleobase + alpha-D-ribose 1-phosphate. The enzyme catalyses a purine 2'-deoxy-D-ribonucleoside + phosphate = a purine nucleobase + 2-deoxy-alpha-D-ribose 1-phosphate. In terms of biological role, catalyzes the reversible phosphorolytic breakdown of the N-glycosidic bond in the beta-(deoxy)ribonucleoside molecules, with the formation of the corresponding free purine bases and pentose-1-phosphate. The polypeptide is Purine nucleoside phosphorylase DeoD-type (Streptococcus uberis (strain ATCC BAA-854 / 0140J)).